An 88-amino-acid chain; its full sequence is Small ribosomal subunit protein bS20 (88 aa).

Positions 1-22 are enriched in basic residues; sequence MANIKSSKKRSIQSEKKRKYNS. Residues 1–26 form a disordered region; that stretch reads MANIKSSKKRSIQSEKKRKYNSSKKS.

Belongs to the bacterial ribosomal protein bS20 family.

Binds directly to 16S ribosomal RNA. This Wigglesworthia glossinidia brevipalpis protein is Small ribosomal subunit protein bS20.